A 282-amino-acid polypeptide reads, in one-letter code: tRNA (guanine-N(1)-)-methyltransferase (282 aa).

Residues glycine 157 and 177 to 182 (VGDYIL) each bind S-adenosyl-L-methionine.

The protein belongs to the RNA methyltransferase TrmD family. Homodimer.

It is found in the cytoplasm. The enzyme catalyses guanosine(37) in tRNA + S-adenosyl-L-methionine = N(1)-methylguanosine(37) in tRNA + S-adenosyl-L-homocysteine + H(+). Specifically methylates guanosine-37 in various tRNAs. This chain is tRNA (guanine-N(1)-)-methyltransferase, found in Rickettsia bellii (strain RML369-C).